The following is a 404-amino-acid chain: Putative nitronate monooxygenase (404 aa).

41–43 (PMA) contacts FMN. Catalysis depends on histidine 224, which acts as the Proton acceptor. Residue histidine 224 participates in substrate binding. FMN-binding positions include 270-272 (AGG) and 293-294 (GT).

Belongs to the nitronate monooxygenase family. NMO class I subfamily. The cofactor is FMN.

The protein resides in the cytoplasm. It carries out the reaction ethylnitronate + O2 = chemical entity + acetaldehyde + nitrite + H(+). Functionally, catalyzes the oxidation of alkyl nitronates to produce the corresponding carbonyl compounds and nitrites. In Saccharomyces cerevisiae (strain ATCC 204508 / S288c) (Baker's yeast), this protein is Putative nitronate monooxygenase.